Consider the following 472-residue polypeptide: Transcriptional activator protein rec16 (472 aa).

Residues 420–444 (FICCYCTKPFLSISKLQEHESSCSH) form a C2H2-type zinc finger.

The protein localises to the nucleus. Its function is as follows. Transcriptional activator that controls the onset of premeiotic DNA synthesis by regulating res2 and some other factor(s) in a mei2 independent cascade. This chain is Transcriptional activator protein rec16 (rec16), found in Schizosaccharomyces pombe (strain 972 / ATCC 24843) (Fission yeast).